Reading from the N-terminus, the 938-residue chain is MIDYKNTLNLPETGFPMRGDLAKREPDMLKNWYDKNLYQKVRESSKGKKSFILHDGPPYANGNIHIGHAVNKILKDIIMKSKTALGFDTPYVPGWDCHGLPIELKVEGIVGKPNEKISAAEFRQACRDYAKEQVEGQKADFIRMGILGDWDNPYLTMNFDTEAHIIRTLGKVIANGHLYKGSKPVHWCLDCGSSLAEAEVEYEDKVSPSIYVRFKAVDSVAVEAKFNAVGKGSGQISAVIWTTTPWTLPSNKAISINPEFDYQLVQFGGERVVLVKDLVESVQKAVGIESVEVLGEVKGDALELMQFQHPFYDYSVPLILGDHVTTDGGTGLVHTAPDHGQDDFVVSKKYNIEMAGLVANDGKFISSTPFFAGLGVFESNEKVLEKLKEVGALLKLERIKHSYPHCWRHKTPIIFRATPQWFIGMETQGLREQALGEIKSVRWIPSWGEARIDTMVANRPDWCISRQRTWGVPMTMFVHNETEELHPRTLEILESVAKRVEEKGIQAWWDLDPVEVLGEEDAKNYRKVPDTLDVWFDSGSTYASVVEARPEFNGNSTDMYLEGSDQHRGWFMSSLMLSTATNGKAPYKQVLTHGFVVDEKGRKMSKSLGNVIVPSEVWNKNGADILRLWVASTDYTGEIAVSHNILNSAGESYRRIRNTARFLLANLNGFDPKRDLVKPEEMIALDRWAVSCALEAQNDIKEAYDNYQFHTVVQRLMRFCSIEMGSFYLDIIKDRQYTTKADSLARRSCQTALWHIAEALVRWMAPILSFTADEIWSYLPQVEGRSEFVFTEEFYEGLFGLTEADKLDDAYWQQILKVRAESNRVLEQARKDKVIGSGLEAKVTLYANNEIRAMLEQLGNELRFVLITSQAIIKPLSEADVAEGEMAGLAVKVERAEGEKCPRCWHFATDIGTHTEHSSVCGRCVENVAGEGEKRSFA.

The short motif at 58–68 is the 'HIGH' region element; that stretch reads PYANGNIHIGH. L-isoleucyl-5'-AMP is bound at residue Glu562. The 'KMSKS' region signature appears at 603–607; that stretch reads KMSKS. Lys606 contacts ATP. The Zn(2+) site is built by Cys901, Cys904, Cys921, and Cys924.

This sequence belongs to the class-I aminoacyl-tRNA synthetase family. IleS type 1 subfamily. Monomer. Requires Zn(2+) as cofactor.

Its subcellular location is the cytoplasm. It carries out the reaction tRNA(Ile) + L-isoleucine + ATP = L-isoleucyl-tRNA(Ile) + AMP + diphosphate. Catalyzes the attachment of isoleucine to tRNA(Ile). As IleRS can inadvertently accommodate and process structurally similar amino acids such as valine, to avoid such errors it has two additional distinct tRNA(Ile)-dependent editing activities. One activity is designated as 'pretransfer' editing and involves the hydrolysis of activated Val-AMP. The other activity is designated 'posttransfer' editing and involves deacylation of mischarged Val-tRNA(Ile). In Actinobacillus pleuropneumoniae serotype 7 (strain AP76), this protein is Isoleucine--tRNA ligase.